The sequence spans 405 residues: Cytoplasmic tRNA 2-thiolation protein 2 (405 aa).

The protein belongs to the CTU2/NCS2 family.

Its subcellular location is the cytoplasm. It participates in tRNA modification; 5-methoxycarbonylmethyl-2-thiouridine-tRNA biosynthesis. In terms of biological role, plays a central role in 2-thiolation of mcm(5)S(2)U at tRNA wobble positions of tRNA(Lys), tRNA(Glu) and tRNA(Gln). May act by forming a heterodimer with NCS6/CTU1 that ligates sulfur from thiocarboxylated URM1 onto the uridine of tRNAs at wobble position. This is Cytoplasmic tRNA 2-thiolation protein 2 from Drosophila simulans (Fruit fly).